Reading from the N-terminus, the 134-residue chain is Small ribosomal subunit protein uS11 (134 aa).

The interval 1–21 (MPPKSRQGAGRKVRRKEKKNV) is disordered. Residues 9-21 (AGRKVRRKEKKNV) are compositionally biased toward basic residues.

The protein belongs to the universal ribosomal protein uS11 family. In terms of assembly, part of the 30S ribosomal subunit. Interacts with proteins S7 and S18. Binds to IF-3.

Located on the platform of the 30S subunit, it bridges several disparate RNA helices of the 16S rRNA. Forms part of the Shine-Dalgarno cleft in the 70S ribosome. The polypeptide is Small ribosomal subunit protein uS11 (Thermobifida fusca (strain YX)).